A 355-amino-acid polypeptide reads, in one-letter code: Guanine nucleotide-binding protein subunit beta-5a (355 aa).

The tract at residues 1–23 (MAAQEEPAQPGDSLATLKSESDT) is disordered. WD repeat units lie at residues 63 to 102 (GHGN…KEHA), 105 to 144 (MPCT…NENL), 153 to 194 (MHTN…QSFH), 195 to 238 (GHAA…QSFE), 239 to 278 (SHDS…EVAI), 280 to 322 (SKES…RVSI), and 325 to 355 (GHEN…RIWA).

It belongs to the WD repeat G protein beta family. In terms of assembly, may interact with RGS9; this interaction stabilizes both proteins and increases RGS9 GTPase-activating protein (GAP) activity, hence accelerating the deactivation of D(2) dopamine receptor-mediated signaling.

It localises to the membrane. Functionally, enhances GTPase-activating protein (GAP) activity of regulator of G protein signaling (RGS) proteins, such as RGS7 and RGS9, hence involved in the termination of the signaling initiated by the G protein coupled receptors (GPCRs) by accelerating the GTP hydrolysis on the G-alpha subunits, thereby promoting their inactivation. Increases RGS7 GTPase-activating protein (GAP) activity, thereby regulating mood and cognition. Increases RGS9 GTPase-activating protein (GAP) activity, hence contributes to the deactivation of G protein signaling initiated by D(2) dopamine receptors. Along with gnb5b, plays an important role in neuronal signaling, including in the parasympathetic, but not sympathetic, control of heart rate. The protein is Guanine nucleotide-binding protein subunit beta-5a of Danio rerio (Zebrafish).